A 428-amino-acid polypeptide reads, in one-letter code: Glucose-1-phosphate adenylyltransferase (428 aa).

Alpha-D-glucose 1-phosphate-binding positions include Y114, G179, 194 to 195 (EK), and S212.

The protein belongs to the bacterial/plant glucose-1-phosphate adenylyltransferase family. In terms of assembly, homotetramer.

It carries out the reaction alpha-D-glucose 1-phosphate + ATP + H(+) = ADP-alpha-D-glucose + diphosphate. It participates in glycan biosynthesis; glycogen biosynthesis. Functionally, involved in the biosynthesis of ADP-glucose, a building block required for the elongation reactions to produce glycogen. Catalyzes the reaction between ATP and alpha-D-glucose 1-phosphate (G1P) to produce pyrophosphate and ADP-Glc. This Yersinia pseudotuberculosis serotype O:1b (strain IP 31758) protein is Glucose-1-phosphate adenylyltransferase.